The chain runs to 297 residues: D-aminoacyl-tRNA deacylase (297 aa).

The protein belongs to the DtdA deacylase family. As to quaternary structure, monomer. Requires Zn(2+) as cofactor.

It carries out the reaction a D-aminoacyl-tRNA + H2O = a tRNA + a D-alpha-amino acid + H(+). It catalyses the reaction glycyl-tRNA(Ala) + H2O = tRNA(Ala) + glycine + H(+). Functionally, D-aminoacyl-tRNA deacylase with broad substrate specificity. By recycling D-aminoacyl-tRNA to D-amino acids and free tRNA molecules, this enzyme counteracts the toxicity associated with the formation of D-aminoacyl-tRNA entities in vivo. This Methanosarcina mazei (strain ATCC BAA-159 / DSM 3647 / Goe1 / Go1 / JCM 11833 / OCM 88) (Methanosarcina frisia) protein is D-aminoacyl-tRNA deacylase.